A 265-amino-acid chain; its full sequence is tRNA pseudouridine synthase A (265 aa).

The active-site Nucleophile is D58. Y116 is a binding site for substrate.

Belongs to the tRNA pseudouridine synthase TruA family. Homodimer.

The enzyme catalyses uridine(38/39/40) in tRNA = pseudouridine(38/39/40) in tRNA. Functionally, formation of pseudouridine at positions 38, 39 and 40 in the anticodon stem and loop of transfer RNAs. The chain is tRNA pseudouridine synthase A from Neisseria gonorrhoeae (strain ATCC 700825 / FA 1090).